A 160-amino-acid polypeptide reads, in one-letter code: uncharacterized protein (160 aa).

One can recognise an N-acetyltransferase domain in the interval Leu-7–Asp-151.

This is an uncharacterized protein from Bacillus subtilis (strain 168).